A 379-amino-acid polypeptide reads, in one-letter code: Fucose-specific lectin g276 (379 aa).

Residue E126 coordinates alpha-L-fucose. Beta-L-fucose-binding residues include E126, R163, and W185. The alpha-L-fucose site is built by W185, R222, and E234. Beta-L-fucose is bound by residues W242 and E282. An alpha-L-fucose-binding site is contributed by W289.

The protein belongs to the fungal fucose-specific lectin family.

Its function is as follows. Lectin that specifically binds to L-fucose. Is associated with the morphogenesis of the fungus, and plays a role in the formation of the constricting rings involved in nematode-trapping. This chain is Fucose-specific lectin g276, found in Arthrobotrys oligospora (strain ATCC 24927 / CBS 115.81 / DSM 1491) (Nematode-trapping fungus).